The chain runs to 338 residues: Methionine import ATP-binding protein MetN 2 (338 aa).

The ABC transporter domain occupies 2–242 (IQLEGVSVDF…PQHAFTRQLV (241 aa)). 39 to 46 (GTSGAGKS) is an ATP binding site.

It belongs to the ABC transporter superfamily. Methionine importer (TC 3.A.1.24) family. As to quaternary structure, the complex is composed of two ATP-binding proteins (MetN), two transmembrane proteins (MetI) and a solute-binding protein (MetQ).

It is found in the cell inner membrane. It carries out the reaction L-methionine(out) + ATP + H2O = L-methionine(in) + ADP + phosphate + H(+). The enzyme catalyses D-methionine(out) + ATP + H2O = D-methionine(in) + ADP + phosphate + H(+). Part of the ABC transporter complex MetNIQ involved in methionine import. Responsible for energy coupling to the transport system. The sequence is that of Methionine import ATP-binding protein MetN 2 from Pectobacterium atrosepticum (strain SCRI 1043 / ATCC BAA-672) (Erwinia carotovora subsp. atroseptica).